The primary structure comprises 169 residues: Gastrula zinc finger protein XlCGF62.1 (169 aa).

6 consecutive C2H2-type zinc fingers follow at residues Phe-6 to His-28, Phe-34 to His-56, Phe-62 to His-84, Phe-90 to His-113, Phe-119 to His-141, and Phe-147 to His-169.

It belongs to the krueppel C2H2-type zinc-finger protein family.

The protein localises to the nucleus. Its function is as follows. May be involved in transcriptional regulation. The polypeptide is Gastrula zinc finger protein XlCGF62.1 (Xenopus laevis (African clawed frog)).